A 100-amino-acid polypeptide reads, in one-letter code: Small ribosomal subunit protein uS14 (100 aa).

Belongs to the universal ribosomal protein uS14 family. As to quaternary structure, part of the 30S ribosomal subunit. Contacts proteins S3 and S10.

Its function is as follows. Binds 16S rRNA, required for the assembly of 30S particles and may also be responsible for determining the conformation of the 16S rRNA at the A site. The sequence is that of Small ribosomal subunit protein uS14 from Prochlorococcus marinus (strain MIT 9215).